The sequence spans 352 residues: Secreted RxLR effector protein 122 (352 aa).

Positions 1 to 21 (MRGAYYVLIALLVVASSQTSA) are cleaved as a signal peptide. The short motif at 48–65 (QFLRGSRNVPGDLAHEER) is the RxLR-dEER element. The span at 280-290 (RGGTTGASRGT) shows a compositional bias: low complexity. A disordered region spans residues 280-352 (RGGTTGASRG…VEPEGHRSKP (73 aa)). The span at 302–315 (AASTSKGKSSVFTE) shows a compositional bias: polar residues.

Belongs to the RxLR effector family.

It is found in the secreted. Its subcellular location is the host nucleus. In terms of biological role, secreted effector that acts as an elicitor that induces cell death in host plant cells. In Plasmopara viticola (Downy mildew of grapevine), this protein is Secreted RxLR effector protein 122.